Here is a 575-residue protein sequence, read N- to C-terminus: NEDD4-binding protein 2-like 2 (575 aa).

Composition is skewed to basic and acidic residues over residues 69–87 (QEDK…EMPG), 129–142 (PPEK…KSET), and 149–167 (DSKR…KLEM). 2 disordered regions span residues 69-169 (QEDK…EMDT) and 555-575 (GEQR…ADDY). Residues 162-194 (SKKLEMDTELSQFYKEIEELENENEASQGSCTE) are a coiled coil. Residues 564–575 (GSHSQVSIADDY) show a composition bias toward polar residues.

This Mus musculus (Mouse) protein is NEDD4-binding protein 2-like 2 (N4bp2l2).